We begin with the raw amino-acid sequence, 360 residues long: MKWKKSLTGLSSYKPGKREEEVMAELGLTKITKLSSNENPLGTSPKVAELQANSSVETEIYPDGWASSLRTVVADFYQLEEEELIFTAGVDELIELLTRVLLDTTKNTVMATPTFVQYRQNALIEGAEVREIPLLVDGAHDLDGMLNAIDDNTTIVWVCNPNNPTGNYIDLADIQAFLDKVPSDVLVVLDEAYIEYVTPQPEKHEKLIRTYKNLIITRTFSKIYGLASARVGYGIADKAIIEQLNIVRPPFNTTSIGQKLAIEAIKDQAFIEACRTSNANGIKQYEAFAKRFEQVKLYPANGNFVLIDLGIEAGTIFSYLEKNGYITRSGAALGFPTAVRITIGKEEENSAVIALLEKLL.

K222 carries the post-translational modification N6-(pyridoxal phosphate)lysine.

It belongs to the class-II pyridoxal-phosphate-dependent aminotransferase family. Histidinol-phosphate aminotransferase subfamily. In terms of assembly, homodimer. Requires pyridoxal 5'-phosphate as cofactor.

It carries out the reaction L-histidinol phosphate + 2-oxoglutarate = 3-(imidazol-4-yl)-2-oxopropyl phosphate + L-glutamate. Its pathway is amino-acid biosynthesis; L-histidine biosynthesis; L-histidine from 5-phospho-alpha-D-ribose 1-diphosphate: step 7/9. In Listeria monocytogenes serotype 4b (strain F2365), this protein is Histidinol-phosphate aminotransferase.